The following is a 290-amino-acid chain: Ribosomal RNA small subunit methyltransferase A (290 aa).

Positions 27, 29, 54, 75, 100, and 125 each coordinate S-adenosyl-L-methionine.

This sequence belongs to the class I-like SAM-binding methyltransferase superfamily. rRNA adenine N(6)-methyltransferase family. RsmA subfamily.

Its subcellular location is the cytoplasm. It catalyses the reaction adenosine(1518)/adenosine(1519) in 16S rRNA + 4 S-adenosyl-L-methionine = N(6)-dimethyladenosine(1518)/N(6)-dimethyladenosine(1519) in 16S rRNA + 4 S-adenosyl-L-homocysteine + 4 H(+). Functionally, specifically dimethylates two adjacent adenosines (A1518 and A1519) in the loop of a conserved hairpin near the 3'-end of 16S rRNA in the 30S particle. May play a critical role in biogenesis of 30S subunits. This Streptococcus pyogenes serotype M3 (strain ATCC BAA-595 / MGAS315) protein is Ribosomal RNA small subunit methyltransferase A.